The sequence spans 195 residues: Guanylate kinase (195 aa).

One can recognise a Guanylate kinase-like domain in the interval 12-191; sequence GLIILISGPS…TIEDIKQLIL (180 aa). 19-26 is an ATP binding site; it reads GPSGVGKG.

The protein belongs to the guanylate kinase family.

Its subcellular location is the cytoplasm. The enzyme catalyses GMP + ATP = GDP + ADP. Essential for recycling GMP and indirectly, cGMP. This chain is Guanylate kinase (gmk), found in Mycoplasmoides gallisepticum (strain R(low / passage 15 / clone 2)) (Mycoplasma gallisepticum).